Consider the following 198-residue polypeptide: Probable thymidylate kinase (198 aa).

7 to 14 (GIDGAGKS) is a binding site for ATP.

The protein belongs to the thymidylate kinase family.

It catalyses the reaction dTMP + ATP = dTDP + ADP. The protein is Probable thymidylate kinase of Methanocorpusculum labreanum (strain ATCC 43576 / DSM 4855 / Z).